The primary structure comprises 155 residues: Transcriptional repressor NrdR (155 aa).

The segment at 3–34 (CPFCHAEETKVVDSRLVADGAQVRRRRECLEC) is a zinc-finger region. One can recognise an ATP-cone domain in the interval 49–139 (PLIIKRDGRR…VYKRFKDVSD (91 aa)).

The protein belongs to the NrdR family. Zn(2+) serves as cofactor.

In terms of biological role, negatively regulates transcription of bacterial ribonucleotide reductase nrd genes and operons by binding to NrdR-boxes. This is Transcriptional repressor NrdR from Legionella pneumophila (strain Lens).